The following is a 276-amino-acid chain: tRNA dimethylallyltransferase (276 aa).

The interaction with substrate tRNA stretch occupies residues 9-12 (DSLS).

It belongs to the IPP transferase family. Monomer. Mg(2+) serves as cofactor.

The enzyme catalyses adenosine(37) in tRNA + dimethylallyl diphosphate = N(6)-dimethylallyladenosine(37) in tRNA + diphosphate. In terms of biological role, catalyzes the transfer of a dimethylallyl group onto the adenine at position 37 in tRNAs that read codons beginning with uridine, leading to the formation of N6-(dimethylallyl)adenosine (i(6)A). In Helicobacter pylori (strain G27), this protein is tRNA dimethylallyltransferase (miaA).